Reading from the N-terminus, the 128-residue chain is Phosphoribosyl-AMP cyclohydrolase (128 aa).

Aspartate 77 lines the Mg(2+) pocket. Cysteine 78 is a Zn(2+) binding site. Residues aspartate 79 and aspartate 81 each coordinate Mg(2+). Residues cysteine 95 and cysteine 102 each contribute to the Zn(2+) site.

It belongs to the PRA-CH family. Homodimer. Mg(2+) serves as cofactor. Requires Zn(2+) as cofactor.

The protein localises to the cytoplasm. It catalyses the reaction 1-(5-phospho-beta-D-ribosyl)-5'-AMP + H2O = 1-(5-phospho-beta-D-ribosyl)-5-[(5-phospho-beta-D-ribosylamino)methylideneamino]imidazole-4-carboxamide. It functions in the pathway amino-acid biosynthesis; L-histidine biosynthesis; L-histidine from 5-phospho-alpha-D-ribose 1-diphosphate: step 3/9. In terms of biological role, catalyzes the hydrolysis of the adenine ring of phosphoribosyl-AMP. The chain is Phosphoribosyl-AMP cyclohydrolase from Methylococcus capsulatus (strain ATCC 33009 / NCIMB 11132 / Bath).